The chain runs to 444 residues: Ras-related protein RabX (444 aa).

29 to 36 serves as a coordination point for GTP; it reads GGDVCSKN. Positions 51–58 match the Effector region motif; it reads LIQVFDDY. 73 to 77 contributes to the GTP binding site; sequence EFSSI. A disordered region spans residues 91–136; the sequence is ENNKNKNNNNNYNYNNNNYNNNNNNNNNNNNNNNNNNNNNNNNNNS. Residues 95–135 show a composition bias toward low complexity; it reads NKNNNNNYNYNNNNYNNNNNNNNNNNNNNNNNNNNNNNNNN. 207-210 is a GTP binding site; the sequence is NDSN. Disordered regions lie at residues 213-232 and 298-401; these read TPNFSDSSSSSSSSSSSNII and LQGD…NNDL. 2 stretches are compositionally biased toward low complexity: residues 217–232 and 303–399; these read SDSSSSSSSSSSSNII and NNNN…TYNN. The S-palmitoyl cysteine moiety is linked to residue Cys-439. Cys-441 carries the post-translational modification Cysteine methyl ester. Cys-441 carries the S-geranylgeranyl cysteine lipid modification. Positions 442-444 are cleaved as a propeptide — removed in mature form; that stretch reads NLM.

This sequence belongs to the small GTPase superfamily. Rab family.

The protein resides in the cell membrane. The chain is Ras-related protein RabX (rabX) from Dictyostelium discoideum (Social amoeba).